A 618-amino-acid chain; its full sequence is Phosphoenolpyruvate carboxykinase [GTP] (618 aa).

Substrate is bound by residues Arg83 and 217–219; that span reads YGG. Positions 226 and 245 each coordinate Mn(2+). Ser267 serves as a coordination point for substrate. Residue 268-273 participates in GTP binding; it reads MCGKTS. Cys269 is an active-site residue. Asp286 serves as a coordination point for Mn(2+). Position 381-383 (381-383) interacts with substrate; the sequence is NAR. Residues Arg383 and Arg415 each coordinate GTP.

This sequence belongs to the phosphoenolpyruvate carboxykinase [GTP] family. Mn(2+) serves as cofactor.

The protein localises to the cytoplasm. The enzyme catalyses oxaloacetate + GTP = phosphoenolpyruvate + GDP + CO2. The protein operates within carbohydrate biosynthesis; gluconeogenesis. In terms of biological role, catalyzes the conversion of oxaloacetate (OAA) to phosphoenolpyruvate (PEP), the rate-limiting step in the metabolic pathway that produces glucose from lactate and other precursors derived from the citric acid cycle. The sequence is that of Phosphoenolpyruvate carboxykinase [GTP] from Pyrococcus abyssi (strain GE5 / Orsay).